We begin with the raw amino-acid sequence, 210 residues long: Peptidyl-tRNA hydrolase (210 aa).

TRNA is bound at residue tyrosine 15. Residue histidine 20 is the Proton acceptor of the active site. 3 residues coordinate tRNA: phenylalanine 66, asparagine 68, and asparagine 114. Positions 186-210 (IHTSKPPRPKPPRREPGDGGTPATA) are disordered.

Belongs to the PTH family. As to quaternary structure, monomer.

It localises to the cytoplasm. It carries out the reaction an N-acyl-L-alpha-aminoacyl-tRNA + H2O = an N-acyl-L-amino acid + a tRNA + H(+). Functionally, hydrolyzes ribosome-free peptidyl-tRNAs (with 1 or more amino acids incorporated), which drop off the ribosome during protein synthesis, or as a result of ribosome stalling. Its function is as follows. Catalyzes the release of premature peptidyl moieties from peptidyl-tRNA molecules trapped in stalled 50S ribosomal subunits, and thus maintains levels of free tRNAs and 50S ribosomes. The chain is Peptidyl-tRNA hydrolase from Variovorax paradoxus (strain S110).